Here is a 134-residue protein sequence, read N- to C-terminus: Putative toxin MJ0605 (134 aa).

It belongs to the UPF0332 family.

Functionally, putative toxin component of a putative type VII toxin-antitoxin (TA) system. Its cognate antitoxin might be MJ0604. This Methanocaldococcus jannaschii (strain ATCC 43067 / DSM 2661 / JAL-1 / JCM 10045 / NBRC 100440) (Methanococcus jannaschii) protein is Putative toxin MJ0605.